A 769-amino-acid polypeptide reads, in one-letter code: Major inner protein P1 (769 aa).

In terms of assembly, homodimer. Associates with the polymerase complex.

The protein localises to the virion. Its function is as follows. P1 is the major inner capsid (core) protein of the polyhedral procapsid, which is responsible for genomic replication and transcription. Forms a dodecahedral shell from 60 asymmetric dimers. Binds to RNA and may be involved in genomic packaging. This chain is Major inner protein P1 (P1), found in Pseudomonas phage phi6 (Bacteriophage phi-6).